Here is a 216-residue protein sequence, read N- to C-terminus: MQAFTQHEGLVAPLDRENVDTDLIIPKQFLKSIKRAGFGPNLFDELRYLDHGEPGMDNSKRPLNPDFVLNQPRYQGASVLLARKNFGCGSSREHAPWALTQYGFRAIIAPSYADIFFNNSFKNGLLPIVLGELEVARLFDEVKAFPGFKLNIDLERQVVIAPDGRELGFDIEPFRKYCLLNGLDDIGLTLRQADKIRAFEAERLARHPWLESRPVA.

It belongs to the LeuD family. LeuD type 1 subfamily. As to quaternary structure, heterodimer of LeuC and LeuD.

It catalyses the reaction (2R,3S)-3-isopropylmalate = (2S)-2-isopropylmalate. The protein operates within amino-acid biosynthesis; L-leucine biosynthesis; L-leucine from 3-methyl-2-oxobutanoate: step 2/4. In terms of biological role, catalyzes the isomerization between 2-isopropylmalate and 3-isopropylmalate, via the formation of 2-isopropylmaleate. The protein is 3-isopropylmalate dehydratase small subunit 1 of Bordetella bronchiseptica (strain ATCC BAA-588 / NCTC 13252 / RB50) (Alcaligenes bronchisepticus).